Consider the following 544-residue polypeptide: Glucose starvation modulator protein 1 (544 aa).

A DNA-binding region (zn(2)-C6 fungal-type) is located at residues 20–48 (CVFCHSKHLQCSNERPCKNCMKRNLGDQC). The disordered stretch occupies residues 65–93 (KKMKSRTNSISSSYRSPSVSESPQNPYTH). A compositionally biased stretch (low complexity) spans 70–86 (RTNSISSSYRSPSVSES). The 73-residue stretch at 403 to 475 (SLIDYEKLLL…FKLFKSVAVG (73 aa)) folds into the PAS domain.

The protein belongs to the ERT1/acuK family.

Its subcellular location is the nucleus. Its function is as follows. Transcription factor which regulates nonfermentable carbon utilization. The sequence is that of Glucose starvation modulator protein 1 (GSM1) from Debaryomyces hansenii (strain ATCC 36239 / CBS 767 / BCRC 21394 / JCM 1990 / NBRC 0083 / IGC 2968) (Yeast).